The following is a 120-amino-acid chain: Non-specific lipid-transfer protein 6 (120 aa).

A signal peptide spans 1–26 (MARSMSLKLACVVVLCLLVDAPLAQG). Cystine bridges form between cysteine 57/cysteine 102 and cysteine 77/cysteine 116.

This sequence belongs to the plant LTP family. Specifically expressed in fiber cells.

Its function is as follows. Plant non-specific lipid-transfer proteins transfer phospholipids as well as galactolipids across membranes. May play a role in wax or cutin deposition in the cell walls of expanding epidermal cells and certain secretory tissues. This chain is Non-specific lipid-transfer protein 6 (LTP6), found in Gossypium hirsutum (Upland cotton).